The sequence spans 237 residues: N-(5'-phosphoribosyl)anthranilate isomerase (237 aa).

The protein belongs to the TrpF family.

It catalyses the reaction N-(5-phospho-beta-D-ribosyl)anthranilate = 1-(2-carboxyphenylamino)-1-deoxy-D-ribulose 5-phosphate. Its pathway is amino-acid biosynthesis; L-tryptophan biosynthesis; L-tryptophan from chorismate: step 3/5. The sequence is that of N-(5'-phosphoribosyl)anthranilate isomerase (TRP1) from Komagataella pastoris (Yeast).